The following is a 246-amino-acid chain: Granzyme H (246 aa).

Residues 1–18 (MQPFLLLLAFLLTPGAGT) form the signal peptide. Residues 19–20 (EE) constitute a propeptide, activation peptide. Residues 21-244 (IIGGHEAKPH…FLPWIKRTMK (224 aa)) form the Peptidase S1 domain. Residues 46-48 (RKR) form a mediates the preference for acidic residues at the P3' and P4' sites region. Cysteine 49 and cysteine 65 are joined by a disulfide. The Charge relay system role is filled by histidine 64. Asparagine 71 and asparagine 104 each carry an N-linked (GlcNAc...) asparagine glycan. Aspartate 108 (charge relay system) is an active-site residue. 2 disulfides stabilise this stretch: cysteine 142-cysteine 208 and cysteine 172-cysteine 187. A glycan (N-linked (GlcNAc...) asparagine) is linked at asparagine 179. Residue serine 202 is the Charge relay system of the active site.

The protein belongs to the peptidase S1 family. Granzyme subfamily. As to expression, constitutively expressed in NK cells.

The protein localises to the cytolytic granule. Inhibited by SERPINB1. Its function is as follows. Cytotoxic chymotrypsin-like serine protease with preference for bulky and aromatic residues at the P1 position and acidic residues at the P3' and P4' sites. Probably necessary for target cell lysis in cell-mediated immune responses. Participates in the antiviral response via direct cleavage of several proteins essential for viral replication. The sequence is that of Granzyme H (GZMH) from Homo sapiens (Human).